We begin with the raw amino-acid sequence, 820 residues long: Disintegrin and metalloproteinase domain-containing protein 29 (820 aa).

The signal sequence occupies residues 1-18 (MKMLLLLHCLGVFLSCSG). A propeptide spanning residues 19 to 193 (HIQDEHPQYH…TQKQSSYVGW (175 aa)) is cleaved from the precursor. Residues 194–674 (WIHFRIVEIV…GPPPKRKKKK (481 aa)) lie on the Extracellular side of the membrane. The region spanning 198-390 (RIVEIVVVID…RTKCLLETVH (193 aa)) is the Peptidase M12B domain. Residues N217 and N320 are each glycosylated (N-linked (GlcNAc...) asparagine). Intrachain disulfides connect C307-C384, C347-C369, and C349-C354. N-linked (GlcNAc...) asparagine glycans are attached at residues N368, N428, N469, N538, N545, N558, and N564. The Disintegrin domain maps to 397 to 483 (VKRCGNGVVE…KCPDDFYVED (87 aa)). A disulfide bond links C455 and C475. Cystine bridges form between C625/C636, C630/C642, and C644/C653. The EGF-like domain occupies 625 to 654 (CSPAFCNKRGICNNKHHCHCNYLWDPPNCL). Residues 675–695 (KFCYLCILLLIVLFILLCCLY) form a helical membrane-spanning segment. Residues 696–820 (RLCKKSKPIK…SQSQPPVTPS (125 aa)) lie on the Cytoplasmic side of the membrane. The tract at residues 706–820 (KQQDVQTPSA…SQSQPPVTPS (115 aa)) is disordered. Over residues 715 to 727 (AKEEEKIQRRPHE) the composition is skewed to basic and acidic residues. Positions 738–820 (PSQSQPPVTP…SQSQPPVTPS (83 aa)) are enriched in low complexity. A run of 9 repeats spans residues 739–747 (SQSQPPVTP), 748–756 (SQSHPQVMP), 757–765 (SQSQPPVTP), 766–774 (SQSQPRVMP), 775–783 (SQSQPPVMP), 784–792 (SQSHPQLTP), 793–801 (SQSQPPVTP), 802–810 (SQRQPQLMP), and 811–819 (SQSQPPVTP). The 9 X 9 AA approximate repeats stretch occupies residues 739–819 (SQSQPPVTPS…PSQSQPPVTP (81 aa)).

As to expression, expressed specifically in testes.

It is found in the membrane. Functionally, may be involved in spermatogenesis and fertilization. Seems to be a non catalytic metalloprotease-like protein. This Homo sapiens (Human) protein is Disintegrin and metalloproteinase domain-containing protein 29 (ADAM29).